A 264-amino-acid polypeptide reads, in one-letter code: Enhancer of mRNA-decapping protein 1 (264 aa).

Disordered regions lie at residues Met1–Ile180 and Tyr193–Tyr264. Basic residues predominate over residues Gly63–Ser74. Residues Asn83 to Leu92 are compositionally biased toward polar residues. Residues Pro108–Thr118 are compositionally biased toward pro residues. 3 stretches are compositionally biased toward low complexity: residues Gln119–Thr134, Asn161–Asn172, and Asn208–Ser226. Residues Phe248–Tyr264 are compositionally biased toward polar residues.

It belongs to the EDC family.

The protein resides in the cytoplasm. Its function is as follows. mRNA-binding protein which stimulates mRNA decapping. In Candida albicans (strain SC5314 / ATCC MYA-2876) (Yeast), this protein is Enhancer of mRNA-decapping protein 1 (EDC1).